Here is a 1203-residue protein sequence, read N- to C-terminus: DNA-directed RNA polymerase subunit beta (1203 aa).

Over residues Ala-1174 to Ala-1195 the composition is skewed to basic and acidic residues. A disordered region spans residues Ala-1174–Glu-1203.

The protein belongs to the RNA polymerase beta chain family. The RNAP catalytic core consists of 2 alpha, 1 beta, 1 beta' and 1 omega subunit. When a sigma factor is associated with the core the holoenzyme is formed, which can initiate transcription.

It carries out the reaction RNA(n) + a ribonucleoside 5'-triphosphate = RNA(n+1) + diphosphate. Its function is as follows. DNA-dependent RNA polymerase catalyzes the transcription of DNA into RNA using the four ribonucleoside triphosphates as substrates. The polypeptide is DNA-directed RNA polymerase subunit beta (Streptococcus pneumoniae (strain JJA)).